Reading from the N-terminus, the 179-residue chain is Ribosome maturation factor RimM (179 aa).

The region spanning valine 102–leucine 175 is the PRC barrel domain.

Belongs to the RimM family. Binds ribosomal protein uS19.

It localises to the cytoplasm. In terms of biological role, an accessory protein needed during the final step in the assembly of 30S ribosomal subunit, possibly for assembly of the head region. Essential for efficient processing of 16S rRNA. May be needed both before and after RbfA during the maturation of 16S rRNA. It has affinity for free ribosomal 30S subunits but not for 70S ribosomes. The sequence is that of Ribosome maturation factor RimM from Frankia casuarinae (strain DSM 45818 / CECT 9043 / HFP020203 / CcI3).